Here is a 451-residue protein sequence, read N- to C-terminus: Chromosomal replication initiator protein DnaA 2 (451 aa).

Residues 1-68 (MQAWEEFLKA…QQKFINGNNK (68 aa)) are domain I, interacts with DnaA modulators. The tract at residues 68–104 (KRIKIHLSVANTPQRAKKTKTANKEKDFKAPFELTFD) is domain II. Residues 105–326 (ELDPLCLFPY…KGLEALVLRL (222 aa)) form a domain III, AAA+ region region. Positions 156, 158, 159, and 160 each coordinate ATP. A domain IV, binds dsDNA region spans residues 327–451 (HLDAKHSITA…CHIILKKLQG (125 aa)).

Belongs to the DnaA family. In terms of assembly, oligomerizes as a right-handed, spiral filament on DNA at oriC.

Its subcellular location is the cytoplasm. In terms of biological role, plays an essential role in the initiation and regulation of chromosomal replication. ATP-DnaA binds to the origin of replication (oriC) to initiate formation of the DNA replication initiation complex once per cell cycle. Binds the DnaA box (a 9 base pair repeat at the origin) and separates the double-stranded (ds)DNA. Forms a right-handed helical filament on oriC DNA; dsDNA binds to the exterior of the filament while single-stranded (ss)DNA is stabiized in the filament's interior. The ATP-DnaA-oriC complex binds and stabilizes one strand of the AT-rich DNA unwinding element (DUE), permitting loading of DNA polymerase. After initiation quickly degrades to an ADP-DnaA complex that is not apt for DNA replication. Binds acidic phospholipids. This is Chromosomal replication initiator protein DnaA 2 from Protochlamydia amoebophila (strain UWE25).